Consider the following 415-residue polypeptide: Putative competence-damage inducible protein (415 aa).

It belongs to the CinA family.

In Limosilactobacillus reuteri (strain DSM 20016) (Lactobacillus reuteri), this protein is Putative competence-damage inducible protein.